Reading from the N-terminus, the 290-residue chain is Flap endonuclease Xni (290 aa).

Asp125 contacts Mg(2+). Residues 181–275 form the 5'-3' exonuclease domain; that stretch reads VKTSQLIDFW…DIRLTTSSSA (95 aa). Residues Leu192, Val203, and Ile206 each contribute to the K(+) site. The tract at residues 205–210 is interaction with DNA; that stretch reads GIGQVT.

Belongs to the Xni family. Mg(2+) is required as a cofactor. It depends on K(+) as a cofactor.

Its function is as follows. Has flap endonuclease activity. During DNA replication, flap endonucleases cleave the 5'-overhanging flap structure that is generated by displacement synthesis when DNA polymerase encounters the 5'-end of a downstream Okazaki fragment. This is Flap endonuclease Xni from Colwellia psychrerythraea (strain 34H / ATCC BAA-681) (Vibrio psychroerythus).